A 374-amino-acid polypeptide reads, in one-letter code: UPF0754 membrane protein SAB1779c (374 aa).

2 helical membrane-spanning segments follow: residues 4–24 (LFIIIFMIVVGAIIGGITNVI) and 354–374 (SLGFILGGIIGFFQGLVAIFV).

Belongs to the UPF0754 family.

The protein resides in the cell membrane. The polypeptide is UPF0754 membrane protein SAB1779c (Staphylococcus aureus (strain bovine RF122 / ET3-1)).